Reading from the N-terminus, the 387-residue chain is Phosphoglycerate kinase (387 aa).

Substrate-binding positions include 21–23, R36, 59–62, R113, and R146; these read DLN and HLGR. Residues K197, E314, and 340–343 each bind ATP; that span reads GGDT.

The protein belongs to the phosphoglycerate kinase family. As to quaternary structure, monomer.

The protein localises to the cytoplasm. It catalyses the reaction (2R)-3-phosphoglycerate + ATP = (2R)-3-phospho-glyceroyl phosphate + ADP. It participates in carbohydrate degradation; glycolysis; pyruvate from D-glyceraldehyde 3-phosphate: step 2/5. This Pseudomonas fluorescens (strain Pf0-1) protein is Phosphoglycerate kinase.